Here is a 1530-residue protein sequence, read N- to C-terminus: Neurexin-1 (1530 aa).

Positions 1 to 30 (MGTALVQHGGCCLLCLSLLLLGCWAELGSG) are cleaved as a signal peptide. Residues 31–217 (LEFPGAEGQW…PPNSGGGSPC (187 aa)) enclose the Laminin G-like 1 domain. At 31–1454 (LEFPGAEGQW…EVIRESSSTT (1424 aa)) the chain is on the extracellular side. N-linked (GlcNAc...) asparagine glycosylation is found at asparagine 125 and asparagine 190. Residues 196 to 219 (PVDGSEVKLDEEPPNSGGGSPCEA) are disordered. Residues 213–255 (GGSPCEAGDEGDGGVCLNGGVCSVVDDQAVCDCSRTGFRGKDC) form the EGF-like 1 domain. Intrachain disulfides connect cysteine 228-cysteine 243 and cysteine 245-cysteine 255. 2 Laminin G-like domains span residues 299-496 (IATF…AFKC) and 503-695 (DPIT…KPSC). Residues aspartate 345, leucine 362, and methionine 430 each contribute to the Ca(2+) site. Disulfide bonds link cysteine 460/cysteine 496, cysteine 666/cysteine 695, cysteine 703/cysteine 714, cysteine 708/cysteine 723, and cysteine 725/cysteine 735. The EGF-like 2 domain maps to 699 to 736 (TAKPCLSNPCKNNGMCRDGWNRYVCDCSGTGYLGRSCE). 2 Laminin G-like domains span residues 741–914 (VLSY…IDYC) and 928–1103 (DPVT…ERGC). Residues aspartate 788 and leucine 805 each coordinate Ca(2+). The N-linked (GlcNAc...) asparagine glycan is linked to asparagine 813. Residue arginine 864 coordinates Ca(2+). Intrachain disulfides connect cysteine 906/cysteine 914, cysteine 1075/cysteine 1103, cysteine 1110/cysteine 1121, cysteine 1115/cysteine 1130, and cysteine 1132/cysteine 1142. The region spanning 1106–1143 (PSTTCQEDSCSNQGVCLQQWDGFSCDCSMTSFSGPLCN) is the EGF-like 3 domain. The region spanning 1149 to 1347 (YIFSKGGGQI…DANIAIVGNV (199 aa)) is the Laminin G-like 6 domain. 2 residues coordinate Ca(2+): aspartate 1199 and valine 1216. Asparagine 1246 carries an N-linked (GlcNAc...) asparagine glycan. Residues isoleucine 1298 and asparagine 1300 each contribute to the Ca(2+) site. Serine 1408 carries O-linked (Xyl...) (heparan sulfate) serine glycosylation. Residues 1412 to 1443 (PSDDEDIDPCEPSSGGLANPTRVGGREPYPGS) are disordered. The helical transmembrane segment at 1455–1475 (GMVVGIVAAAALCILILLYAM) threads the bilayer. At 1476–1530 (YKYRNRDEGSYHVDESRNYISNSAQSNGAVVKEKQPSSAKSANKNKKNKDKEYYV) the chain is on the cytoplasmic side. The segment at 1497–1523 (NSAQSNGAVVKEKQPSSAKSANKNKKN) is interaction with CASK. The interval 1497 to 1530 (NSAQSNGAVVKEKQPSSAKSANKNKKNKDKEYYV) is disordered.

The protein belongs to the neurexin family. In terms of assembly, interacts (via laminin G-like domain 2 and/or laminin G-like domain 6) with NLGN1 forming a heterotetramer, where one NLGN1 dimer interacts with one NRXN1 dimer. Also interacts (via laminin G-like domain 2 and/or laminin G-like domain 6) with NLGN2, NLGN3 and NLGN4L; interactions with NLGN1, NLGN2, NLGN3 and NLGN4L are calcium-dependent. Interacts (via cytoplasmic C-terminal region) with CASK (via the PDZ, SH3 and guanylate kinase-like domains). Interacts (via cytoplasmic C-terminus) with CASKIN1 and APBA1. Interacts (via laminin G-like domain 2) with NXPH1 and NXPH3. Alpha-type isoforms (neurexin-1-alpha) interact (via laminin G-like domain 2 and/or laminin G-like domain 6) with DAG1 (via alpha-dystroglycan chain). Interacts with LRRTM1, LRRTM2, LRRTM3 and LRRTM4. Interacts with SYT13 and SYTL1. Interacts with CBLN1, CBLN2 and, less avidly, with CBLN4. Interacts with CLSTN3. Alpha-type isoforms interact with alpha-latrotoxin from spider venom. O-glycosylated; contains heparan sulfate. Heparan sulfate attachment is required for synapse development by mediating interactions with neuroligins and LRRTM2. In terms of tissue distribution, brain (neuronal synapse).

The protein localises to the presynaptic cell membrane. In terms of biological role, cell surface protein involved in cell-cell-interactions, exocytosis of secretory granules and regulation of signal transmission. Function is isoform-specific. Alpha-type isoforms have a long N-terminus with six laminin G-like domains and play an important role in synaptic signal transmission. Alpha-type isoforms play a role in the regulation of calcium channel activity and Ca(2+)-triggered neurotransmitter release at synapses and at neuromuscular junctions. They play an important role in Ca(2+)-triggered exocytosis of secretory granules in pituitary gland. They may affect their functions at synapses and in endocrine cells via their interactions with proteins from the exocytotic machinery. Likewise, alpha-type isoforms play a role in regulating the activity of postsynaptic NMDA receptors, a subtype of glutamate-gated ion channels. Both alpha-type and beta-type isoforms may play a role in the formation or maintenance of synaptic junctions via their interactions (via the extracellular domains) with neuroligin family members, CBLN1 or CBLN2. In vitro, triggers the de novo formation of presynaptic structures. May be involved in specification of excitatory synapses. Alpha-type isoforms were first identified as receptors for alpha-latrotoxin from spider venom. This Rattus norvegicus (Rat) protein is Neurexin-1 (Nrxn1).